The primary structure comprises 370 residues: tRNA-specific 2-thiouridylase MnmA (370 aa).

ATP contacts are provided by residues Ala-24–Ser-31 and Leu-50. Residue Cys-118 is the Nucleophile of the active site. An intrachain disulfide couples Cys-118 to Cys-214. Gly-142 provides a ligand contact to ATP. Residues Lys-164 to Gln-166 form an interaction with tRNA region. Cys-214 serves as the catalytic Cysteine persulfide intermediate.

It belongs to the MnmA/TRMU family.

The protein resides in the cytoplasm. It catalyses the reaction S-sulfanyl-L-cysteinyl-[protein] + uridine(34) in tRNA + AH2 + ATP = 2-thiouridine(34) in tRNA + L-cysteinyl-[protein] + A + AMP + diphosphate + H(+). Catalyzes the 2-thiolation of uridine at the wobble position (U34) of tRNA, leading to the formation of s(2)U34. The chain is tRNA-specific 2-thiouridylase MnmA from Ehrlichia ruminantium (strain Gardel).